A 458-amino-acid chain; its full sequence is Translation initiation factor eIF2B subunit gamma (458 aa).

Serine 291 bears the Phosphoserine mark.

The protein belongs to the eIF-2B gamma/epsilon subunits family. As to quaternary structure, component of the translation initiation factor 2B (eIF2B) complex which is a heterodecamer of two sets of five different subunits: alpha, beta, gamma, delta and epsilon. Subunits alpha, beta and delta comprise a regulatory subcomplex and subunits epsilon and gamma comprise a catalytic subcomplex. Within the complex, the hexameric regulatory complex resides at the center, with the two heterodimeric catalytic subcomplexes bound on opposite sides.

The protein resides in the cytoplasm. It is found in the cytosol. Its function is as follows. Acts as a component of the translation initiation factor 2B (eIF2B) complex, which catalyzes the exchange of GDP for GTP on the eukaryotic initiation factor 2 (eIF2) complex gamma subunit. Its guanine nucleotide exchange factor activity is repressed when bound to eIF2 complex phosphorylated on the alpha subunit, thereby limiting the amount of methionyl-initiator methionine tRNA available to the ribosome and consequently global translation is repressed. The sequence is that of Translation initiation factor eIF2B subunit gamma (tif223) from Schizosaccharomyces pombe (strain 972 / ATCC 24843) (Fission yeast).